Consider the following 848-residue polypeptide: MTDKHNEEGKEKKLKLPSKMIIGKHVDSKKFKTSYFTSHNNSVTVEIKGGRKFSSSSSLPHKINTQISTIDEFNEKISLLKKAASFAKSEEYRSNVTNFSSTVEVTEQQTEAENSTNINLSEQTIKNNSHQSSSNTIETTQEKKQNDDLSSNITPVEAITQLEPNQKILQNQQNSSSISLNSIISKPQNKSSIENNVEFETEATSTKSSAIWTKKNNSAKPKKSDIYQMLDSDSKSKTRSFAAIKRARDKEKRKLQNNALTKKIYREVIIPDTITVNELALRMSEKLSDVMQALLKLGIKANINQSIDVDTAELIAISLGHSVKRTQDSDVENILHSDKDTQDSLLPRAPIITVMGHVDHGKTCLLDALRSTDVISTEAGGITQHIGAYKVNLPNNKSITFIDTPGHEAFSEIRTRGAKVTDIVVLVIAANDGIKPQTIEAINHAKAAKVPILVAINKIDAPDANPDKVKNALLAHNIVPEDLGGETLVVPISALKKINLDKLEEAILLLADMLELKANPNALASGTVIESQVDHKSGVIATILVQRGTLKIGDILIAGNGFGKVKRMINDKNQQVNYAYPSDPVKILGLSQIPNAGDAVAVVQNEKQARSIVDYRIRKAKEEQDLKVHNISLEELLKQASANQFKELSLILKTDVHGSLEAIVASINKIVNDEVKIKILHAAVGVINESDIILANASNATILGFNVKIDSTASIKAERNKTNIKYYSIIYDLIDYVKSAVSGMLSPIIHEEYTGRAEVRAVFNITKVGKIAGCYVTKGYIQRNSKVKLLRNNEVIFSGPLQTLKRFKEHTKEVKEGFECGIELANYYDINVGDIIEAFIVTEEKAKL.

Positions 106–150 (TEQQTEAENSTNINLSEQTIKNNSHQSSSNTIETTQEKKQNDDLS) are disordered. Residues 112-139 (AENSTNINLSEQTIKNNSHQSSSNTIET) are compositionally biased toward polar residues. The 171-residue stretch at 347–517 (PRAPIITVMG…LLLADMLELK (171 aa)) folds into the tr-type G domain. The G1 stretch occupies residues 356–363 (GHVDHGKT). A GTP-binding site is contributed by 356–363 (GHVDHGKT). The interval 381–385 (GITQH) is G2. The interval 403 to 406 (DTPG) is G3. GTP contacts are provided by residues 403 to 407 (DTPGH) and 457 to 460 (NKID). The segment at 457 to 460 (NKID) is G4. The interval 493 to 495 (SAL) is G5.

This sequence belongs to the TRAFAC class translation factor GTPase superfamily. Classic translation factor GTPase family. IF-2 subfamily.

It is found in the cytoplasm. One of the essential components for the initiation of protein synthesis. Protects formylmethionyl-tRNA from spontaneous hydrolysis and promotes its binding to the 30S ribosomal subunits. Also involved in the hydrolysis of GTP during the formation of the 70S ribosomal complex. In Orientia tsutsugamushi (strain Boryong) (Rickettsia tsutsugamushi), this protein is Translation initiation factor IF-2.